The primary structure comprises 131 residues: MTTKRKPYVRPMTSTWWKKLPFYRFYMLREGTAVPAVWFSIELIFGLFALKNGPDAWAGFVDFLQNPVIVIINLITLAAALLHTKTWFELAPKAANIIVKDEKMGPEPIIKSLWAVTVVATIVILFVALYW.

Transmembrane regions (helical) follow at residues 30–50 (EGTA…LFAL), 63–83 (FLQN…ALLH), and 109–129 (IIKS…FVAL).

It belongs to the FrdC family. Part of an enzyme complex containing four subunits: a flavoprotein (FrdA), an iron-sulfur protein (FrdB), and two hydrophobic anchor proteins (FrdC and FrdD).

It is found in the cell inner membrane. Its function is as follows. Two distinct, membrane-bound, FAD-containing enzymes are responsible for the catalysis of fumarate and succinate interconversion; fumarate reductase is used in anaerobic growth, and succinate dehydrogenase is used in aerobic growth. Anchors the catalytic components of the fumarate reductase complex to the cell inner membrane, binds quinones. The protein is Fumarate reductase subunit C of Shigella boydii serotype 4 (strain Sb227).